Consider the following 453-residue polypeptide: tRNA modification GTPase MnmE (453 aa).

Residues arginine 22, glutamate 79, and lysine 119 each contribute to the (6S)-5-formyl-5,6,7,8-tetrahydrofolate site. The TrmE-type G domain occupies 215 to 376 (GMKVVIAGRP…LRNHLKECMG (162 aa)). Asparagine 225 contributes to the K(+) binding site. Residues 225 to 230 (NAGKSS), 244 to 250 (TDIAGTT), 269 to 272 (DTAG), and 334 to 337 (NKAD) contribute to the GTP site. Serine 229 provides a ligand contact to Mg(2+). Positions 244, 246, and 249 each coordinate K(+). Residue threonine 250 coordinates Mg(2+). Lysine 453 is a binding site for (6S)-5-formyl-5,6,7,8-tetrahydrofolate.

The protein belongs to the TRAFAC class TrmE-Era-EngA-EngB-Septin-like GTPase superfamily. TrmE GTPase family. Homodimer. Heterotetramer of two MnmE and two MnmG subunits. K(+) serves as cofactor.

The protein resides in the cytoplasm. In terms of biological role, exhibits a very high intrinsic GTPase hydrolysis rate. Involved in the addition of a carboxymethylaminomethyl (cmnm) group at the wobble position (U34) of certain tRNAs, forming tRNA-cmnm(5)s(2)U34. In Vibrio vulnificus (strain YJ016), this protein is tRNA modification GTPase MnmE.